The following is a 456-amino-acid chain: Taurine--pyruvate aminotransferase (456 aa).

Lys-280 is modified (N6-(pyridoxal phosphate)lysine).

Belongs to the class-III pyridoxal-phosphate-dependent aminotransferase family. As to quaternary structure, homotetramer. It depends on pyridoxal 5'-phosphate as a cofactor.

The catalysed reaction is taurine + pyruvate = sulfoacetaldehyde + L-alanine. The protein operates within organosulfur degradation; alkanesulfonate degradation. In terms of biological role, involved in an anaerobic respiration pathway that converts the sulfonate taurine (2-aminoethanesulfonate) to ammonia, acetate and sulfide. Catalyzes the initial metabolic reaction of anaerobic taurine degradation, i.e. the transamination reaction between taurine and pyruvate leading to sulfoacetaldehyde and alanine. The polypeptide is Taurine--pyruvate aminotransferase (Bilophila wadsworthia (strain 3_1_6)).